The chain runs to 197 residues: Xanthine phosphoribosyltransferase (197 aa).

2 residues coordinate xanthine: Leu-20 and Asn-27. 5-phospho-alpha-D-ribose 1-diphosphate is bound at residue 128 to 132; sequence ANGQA. Position 156 (Lys-156) interacts with xanthine.

Belongs to the purine/pyrimidine phosphoribosyltransferase family. Xpt subfamily. Homodimer.

It is found in the cytoplasm. The enzyme catalyses XMP + diphosphate = xanthine + 5-phospho-alpha-D-ribose 1-diphosphate. Its pathway is purine metabolism; XMP biosynthesis via salvage pathway; XMP from xanthine: step 1/1. Functionally, converts the preformed base xanthine, a product of nucleic acid breakdown, to xanthosine 5'-monophosphate (XMP), so it can be reused for RNA or DNA synthesis. This chain is Xanthine phosphoribosyltransferase, found in Bacillus cereus (strain ATCC 10987 / NRS 248).